The primary structure comprises 438 residues: sn-glycerol-3-phosphate-binding periplasmic protein UgpB (438 aa).

The signal sequence occupies residues 1–23 (MKPLRYTASALALGLALMANAQA). Sn-glycerol 3-phosphate contacts are provided by Y65, E89, S144, S270, G307, Y346, and R397.

The protein belongs to the bacterial solute-binding protein 1 family. In terms of assembly, the complex is composed of two ATP-binding proteins (UgpC), two transmembrane proteins (UgpA and UgpE) and a solute-binding protein (UgpB).

It is found in the periplasm. In terms of biological role, part of the ABC transporter complex UgpBAEC involved in sn-glycerol-3-phosphate (G3P) import. Binds G3P. This Escherichia coli O1:K1 / APEC protein is sn-glycerol-3-phosphate-binding periplasmic protein UgpB (ugpB).